Reading from the N-terminus, the 300-residue chain is Bifunctional protein FolD 2 (300 aa).

Residues 165–167, serine 190, and isoleucine 231 contribute to the NADP(+) site; that span reads GRS.

The protein belongs to the tetrahydrofolate dehydrogenase/cyclohydrolase family. As to quaternary structure, homodimer.

It catalyses the reaction (6R)-5,10-methylene-5,6,7,8-tetrahydrofolate + NADP(+) = (6R)-5,10-methenyltetrahydrofolate + NADPH. It carries out the reaction (6R)-5,10-methenyltetrahydrofolate + H2O = (6R)-10-formyltetrahydrofolate + H(+). It functions in the pathway one-carbon metabolism; tetrahydrofolate interconversion. In terms of biological role, catalyzes the oxidation of 5,10-methylenetetrahydrofolate to 5,10-methenyltetrahydrofolate and then the hydrolysis of 5,10-methenyltetrahydrofolate to 10-formyltetrahydrofolate. The polypeptide is Bifunctional protein FolD 2 (Pseudomonas savastanoi pv. phaseolicola (strain 1448A / Race 6) (Pseudomonas syringae pv. phaseolicola (strain 1448A / Race 6))).